The following is a 423-amino-acid chain: Deferrochelatase (423 aa).

Residues 1 to 35 (MQYEDENGVNEPSRRRLLKGIGALALAGSCPVAHA) constitute a signal peptide (tat-type signal). Residues 236–238 (GTA), histidine 329, 334–336 (NPR), and arginine 347 each bind heme b.

The protein belongs to the DyP-type peroxidase family. EfeB subfamily. In terms of assembly, homodimer. Part of a ferrous iron transporter composed of EfeU, EfeO and EfeB. The cofactor is heme b. Post-translationally, predicted to be exported by the Tat system. The position of the signal peptide cleavage has not been experimentally proven.

The protein resides in the periplasm. It catalyses the reaction heme b + 2 H(+) = protoporphyrin IX + Fe(2+). Involved in the recovery of exogenous heme iron. Extracts iron from heme while preserving the protoporphyrin ring intact. This Escherichia coli O6:H1 (strain CFT073 / ATCC 700928 / UPEC) protein is Deferrochelatase (efeB).